Consider the following 706-residue polypeptide: Polyribonucleotide nucleotidyltransferase (706 aa).

Positions 486 and 492 each coordinate Mg(2+). The KH domain maps to 553-612 (PRIYTMKINPEKIKDVIGKGGSVIRALTDETGTTIEIEDDGTIKIAATDGDKAKHAIRRI). An S1 motif domain is found at 622-690 (NRIYAGKVTR…RQGRIRLSMK (69 aa)).

The protein belongs to the polyribonucleotide nucleotidyltransferase family. Component of the RNA degradosome, which is a multiprotein complex involved in RNA processing and mRNA degradation. Mg(2+) serves as cofactor.

The protein resides in the cytoplasm. The enzyme catalyses RNA(n+1) + phosphate = RNA(n) + a ribonucleoside 5'-diphosphate. Involved in mRNA degradation. Catalyzes the phosphorolysis of single-stranded polyribonucleotides processively in the 3'- to 5'-direction. The protein is Polyribonucleotide nucleotidyltransferase of Yersinia enterocolitica serotype O:8 / biotype 1B (strain NCTC 13174 / 8081).